The following is a 136-amino-acid chain: Small ribosomal subunit protein uS9 (136 aa).

The tract at residues 97–136 is disordered; that stretch reads SPDNRKPLKTEGHLSRDPRAKERRKYGLKKARKAPQFSKR. Residues 98 to 116 are compositionally biased toward basic and acidic residues; that stretch reads PDNRKPLKTEGHLSRDPRA. The segment covering 117-136 has biased composition (basic residues); the sequence is KERRKYGLKKARKAPQFSKR.

Belongs to the universal ribosomal protein uS9 family.

The chain is Small ribosomal subunit protein uS9 from Prochlorococcus marinus (strain AS9601).